The sequence spans 1047 residues: Atrial natriuretic peptide receptor 2 (1047 aa).

The N-terminal stretch at 1–16 (MALPSLLLVVAALAGG) is a signal peptide. The Extracellular portion of the chain corresponds to 17 to 458 (VRPPGARNLT…DKTPLSTLAI (442 aa)). Residues Asn-24 and Asn-35 are each glycosylated (N-linked (GlcNAc...) asparagine). A disulfide bridge connects residues Cys-75 and Cys-101. Residues Asn-161, Asn-195, Asn-244, Asn-277, and Asn-349 are each glycosylated (N-linked (GlcNAc...) asparagine). The helical transmembrane segment at 459 to 478 (VALGTGVTFIMFGVSSFLIF) threads the bilayer. Residues 479–1047 (RKLMLEKELA…GEQKGPPGLL (569 aa)) lie on the Cytoplasmic side of the membrane. Ser-513 carries the phosphoserine modification. The 274-residue stretch at 513 to 786 (SRLTLSLRGS…PDFGQIKGFI (274 aa)) folds into the Protein kinase domain. Thr-516 carries the phosphothreonine modification. Ser-518, Ser-522, Ser-523, and Ser-526 each carry phosphoserine. Thr-529 is modified (phosphothreonine). The Guanylate cyclase domain occupies 861–991 (TIYFSDIVGF…DTVNTASRME (131 aa)).

This sequence belongs to the adenylyl cyclase class-4/guanylyl cyclase family. In terms of processing, phosphorylated. Phosphorylation of the protein kinase-like domain is required for full activation by CNP. Glycosylated. Widely expressed. Expressed in the columnar proliferating and prehypertrophic chondrocyte layers of the tibia.

It localises to the cell membrane. It catalyses the reaction GTP = 3',5'-cyclic GMP + diphosphate. Functionally, receptor for the C-type natriuretic peptide NPPC/CNP hormone. Has guanylate cyclase activity upon binding of its ligand. May play a role in the regulation of skeletal growth. The protein is Atrial natriuretic peptide receptor 2 (Npr2) of Mus musculus (Mouse).